The sequence spans 267 residues: Hydroxyethylthiazole kinase (267 aa).

Methionine 48 contributes to the substrate binding site. 2 residues coordinate ATP: arginine 124 and serine 170. Glycine 197 contacts substrate.

The protein belongs to the Thz kinase family. Mg(2+) is required as a cofactor.

It carries out the reaction 5-(2-hydroxyethyl)-4-methylthiazole + ATP = 4-methyl-5-(2-phosphooxyethyl)-thiazole + ADP + H(+). It functions in the pathway cofactor biosynthesis; thiamine diphosphate biosynthesis; 4-methyl-5-(2-phosphoethyl)-thiazole from 5-(2-hydroxyethyl)-4-methylthiazole: step 1/1. In terms of biological role, catalyzes the phosphorylation of the hydroxyl group of 4-methyl-5-beta-hydroxyethylthiazole (THZ). This chain is Hydroxyethylthiazole kinase, found in Aliivibrio fischeri (strain ATCC 700601 / ES114) (Vibrio fischeri).